Here is a 316-residue protein sequence, read N- to C-terminus: Rhomboid-related protein 4 (316 aa).

The Cytoplasmic portion of the chain corresponds to 1–21 (MQRRTRGIDTGLLLLLSQVFH). The chain crosses the membrane as a helical span at residues 22 to 42 (IGINNIPPVTLATLAVNVWFF). The Extracellular segment spans residues 43-103 (LNPWKPLYHS…KLEKRLGSRW (61 aa)). Residues 104–124 (FAYIIATFSLLTGVVYLLLQF) traverse the membrane as a helical segment. Residues 125-137 (ASAELMNQPDFKR) lie on the Cytoplasmic side of the membrane. A helical membrane pass occupies residues 138–154 (NCAVGFSGVLFALKVLS). Ser144 acts as the Nucleophile in catalysis. Over 155–182 (NHYCPGGFVNILGFPVPNRFACWAELAA) the chain is Extracellular. Residues 183-203 (IHFCTPGTSFAGHLAGILVGL) traverse the membrane as a helical segment. Residue His195 is part of the active site. Residues 204-316 (MYTQGPLKKI…RQRLHRFDGQ (113 aa)) are Cytoplasmic-facing. The ubiquitin-binding domain (UBD) stretch occupies residues 269–284 (SEEEQLERALRASIWD). Positions 301–316 (PEEEMRRQRLHRFDGQ) are VCP/p97-interacting motif (VIM).

It belongs to the peptidase S54 family. In terms of assembly, interacts with BIK and STEAP3. Interacts (via C-terminal domain) with VCP. Interacts with ubiquitin and ubiquitinated proteins. Expressed in intestine, lung, brain, kidney, epididymis and testis.

Its subcellular location is the endoplasmic reticulum membrane. The protein localises to the mitochondrion membrane. The enzyme catalyses Cleaves type-1 transmembrane domains using a catalytic dyad composed of serine and histidine that are contributed by different transmembrane domains.. Inhibited by aprotinin. Functionally, intramembrane-cleaving serine protease that cleaves single transmembrane or multi-pass membrane proteins in the hydrophobic plane of the membrane, luminal loops and juxtamembrane regions. Involved in regulated intramembrane proteolysis and the subsequent release of functional polypeptides from their membrane anchors. Functional component of endoplasmic reticulum-associated degradation (ERAD) for misfolded membrane proteins. Required for the degradation process of some specific misfolded endoplasmic reticulum (ER) luminal proteins. Participates in the transfer of misfolded proteins from the ER to the cytosol, where they are destroyed by the proteasome in a ubiquitin-dependent manner. Functions in BIK, MPZ, PKD1, PTCRA, RHO, STEAP3 and TRAC processing. Involved in the regulation of exosomal secretion; inhibits the TSAP6-mediated secretion pathway. Involved in the regulation of apoptosis; modulates BIK-mediated apoptotic activity. Also plays a role in the regulation of spermatogenesis; inhibits apoptotic activity in spermatogonia. This is Rhomboid-related protein 4 (Rhbdd1) from Rattus norvegicus (Rat).